The chain runs to 542 residues: DNA-binding protein modulo (542 aa).

The tract at residues methionine 1–lysine 166 is disordered. Serine 42 and serine 44 each carry phosphoserine. A compositionally biased stretch (acidic residues) spans serine 59–proline 114. Phosphoserine is present on residues serine 120, serine 129, and serine 142. Acidic residues predominate over residues alanine 123–alanine 135. Residues proline 136–glycine 158 are compositionally biased toward basic and acidic residues. 4 consecutive RRM domains span residues glutamine 175 to asparagine 251, arginine 258 to glutamine 331, leucine 340 to serine 429, and arginine 420 to leucine 489. Serine 304 bears the Phosphoserine mark. Serine 330 bears the Phosphoserine; by PKA mark. At serine 443 the chain carries Phosphoserine. Residues arginine 505–phenylalanine 542 form a disordered region.

In terms of processing, the N-terminus is blocked.

It localises to the nucleus. In terms of biological role, its capacity to bind DNA and protein(s), and its differential expression during development suggest a role in the regulation of gene expression during Drosophila development. It could, in interaction with other factors, be required for the translation of instructions provided by pattern forming genes and controls, via chromatin changes, the activity of genes critical for the process of morphogenesis of several embryonic territories. This Drosophila melanogaster (Fruit fly) protein is DNA-binding protein modulo (mod).